A 171-amino-acid polypeptide reads, in one-letter code: Calcium channel flower homolog (171 aa).

The Cytoplasmic segment spans residues 1 to 31; the sequence is MSGSVAAGAAAGPVPPAQEEGMTWWYRWLCR. The chain crosses the membrane as a helical span at residues 32 to 52; the sequence is LAGVLGAVSCAISGLFNCVTI. Topologically, residues 53–56 are extracellular; sequence HPLN. The chain crosses the membrane as a helical span at residues 57 to 77; sequence IAAGVWMIMNAFILLLCEAPF. Residues 78-101 are Cytoplasmic-facing; sequence CCQFVEFANTVAEKVDRLRSWQKA. The helical transmembrane segment at 102-122 threads the bilayer; that stretch reads VFYCGMAIVPIVMSLTLTTLL. Residues 123 to 124 are Extracellular-facing; the sequence is GN. A helical membrane pass occupies residues 125 to 141; it reads AIAFATGVLYGLSALGK. Over 142–171 the chain is Cytoplasmic; sequence KGDAISYARIQQQRQQADEEKLAETFEGEL.

The protein belongs to the calcium channel flower family. Interacts with adaptor protein complex 2 (AP-2). As to expression, expressed in calyces in the brain (at protein level). Detected in cultured hippocampal neurons (at protein level).

The protein resides in the cell membrane. Its subcellular location is the cytoplasmic vesicle. It localises to the secretory vesicle. The protein localises to the synaptic vesicle. It is found in the golgi apparatus. The protein resides in the vesicle. In terms of biological role, transmembrane protein which mediates synaptic endocytosis and fitness-based cell culling. In response to different stimulus strengths, controls two major modes of synaptic vesicle (SV) retrieval in hippocampal neurons; Clathrin-mediated endocytosis (CME) in response to mild stimulation and activity-dependent bulk endocytosis (ADBE) in response to strong stimulation. In cytotoxic T-lymphoocytes (CTLs) facilitates calcium-dependent endocytosis of cytotoxic granules (CGs) at the immuno synapse. Different isoforms work as fitness fingerprints in 'loser' and 'winner' cells and thereby mediate win/lose decisions as part of the cell competition process. In Rattus norvegicus (Rat), this protein is Calcium channel flower homolog (Cacfd1).